Reading from the N-terminus, the 235-residue chain is Histidine/lysine/arginine/ornithine transport system permease protein HisM (235 aa).

Residues methionine 1–threonine 26 are Periplasmic-facing. In terms of domain architecture, ABC transmembrane type-1 spans valine 23–phenylalanine 221. A helical transmembrane segment spans residues leucine 27–glycine 47. Topologically, residues arginine 48 to proline 58 are cytoplasmic. The chain crosses the membrane as a helical span at residues isoleucine 59–tyrosine 79. The Periplasmic portion of the chain corresponds to serine 80–cysteine 104. Residues threonine 105–isoleucine 125 traverse the membrane as a helical segment. The Cytoplasmic portion of the chain corresponds to arginine 126–arginine 157. Residues isoleucine 158–phenylalanine 178 traverse the membrane as a helical segment. The Periplasmic portion of the chain corresponds to threonine 179 to proline 199. Residues phenylalanine 200–leucine 220 traverse the membrane as a helical segment. Topologically, residues phenylalanine 221–lysine 235 are cytoplasmic.

This sequence belongs to the binding-protein-dependent transport system permease family. HisMQ subfamily. As to quaternary structure, the HisPMQJ complex is composed of two ATP-binding proteins (HisP), two transmembrane proteins (HisM and HisQ) and a solute-binding protein (HisJ). The HisPMQ-ArgT complex is composed of two ATP-binding proteins (HisP), two transmembrane proteins (HisM and HisQ) and a solute-binding protein (ArgT).

The protein localises to the cell inner membrane. Its function is as follows. Part of the ABC transporter complex HisPMQJ involved in histidine transport. Is also part of the ABC transporter complex HisPMQ-ArgT involved in lysine/arginine/ornithine transport. Probably responsible for the translocation of the substrate across the membrane. This chain is Histidine/lysine/arginine/ornithine transport system permease protein HisM (hisM), found in Salmonella typhi.